Here is a 156-residue protein sequence, read N- to C-terminus: ATP synthase subunit b (156 aa).

Residues 7 to 27 (LFVQAIVFLILVLFTMKFVWP) traverse the membrane as a helical segment.

The protein belongs to the ATPase B chain family. F-type ATPases have 2 components, F(1) - the catalytic core - and F(0) - the membrane proton channel. F(1) has five subunits: alpha(3), beta(3), gamma(1), delta(1), epsilon(1). F(0) has three main subunits: a(1), b(2) and c(10-14). The alpha and beta chains form an alternating ring which encloses part of the gamma chain. F(1) is attached to F(0) by a central stalk formed by the gamma and epsilon chains, while a peripheral stalk is formed by the delta and b chains.

The protein resides in the cell inner membrane. Functionally, f(1)F(0) ATP synthase produces ATP from ADP in the presence of a proton or sodium gradient. F-type ATPases consist of two structural domains, F(1) containing the extramembraneous catalytic core and F(0) containing the membrane proton channel, linked together by a central stalk and a peripheral stalk. During catalysis, ATP synthesis in the catalytic domain of F(1) is coupled via a rotary mechanism of the central stalk subunits to proton translocation. Component of the F(0) channel, it forms part of the peripheral stalk, linking F(1) to F(0). The polypeptide is ATP synthase subunit b (Delftia acidovorans (strain DSM 14801 / SPH-1)).